A 124-amino-acid polypeptide reads, in one-letter code: uncharacterized protein (124 aa).

It belongs to the asfivirus H124R family.

The protein localises to the virion. This is an uncharacterized protein from Ornithodoros (relapsing fever ticks).